Here is a 52-residue protein sequence, read N- to C-terminus: ATP synthase protein 8 (52 aa).

A helical transmembrane segment spans residues 7–27; that stretch reads MKWFLIYFIYLLIFYLFIMLI.

The protein belongs to the ATPase protein 8 family. In terms of assembly, F-type ATPases have 2 components, CF(1) - the catalytic core - and CF(0) - the membrane proton channel.

It is found in the mitochondrion membrane. Functionally, mitochondrial membrane ATP synthase (F(1)F(0) ATP synthase or Complex V) produces ATP from ADP in the presence of a proton gradient across the membrane which is generated by electron transport complexes of the respiratory chain. F-type ATPases consist of two structural domains, F(1) - containing the extramembraneous catalytic core and F(0) - containing the membrane proton channel, linked together by a central stalk and a peripheral stalk. During catalysis, ATP synthesis in the catalytic domain of F(1) is coupled via a rotary mechanism of the central stalk subunits to proton translocation. Part of the complex F(0) domain. Minor subunit located with subunit a in the membrane. This chain is ATP synthase protein 8 (mt:ATPase8), found in Apis mellifera ligustica (Common honeybee).